Reading from the N-terminus, the 372-residue chain is Cytochrome b (372 aa).

4 helical membrane passes run 29–49 (FGSM…ILSW), 73–95 (WFIR…LHIL), 108–128 (VWYS…LGYV), and 174–194 (FFSF…IHLI). Positions 79 and 93 each coordinate heme b. Residues H178 and H192 each coordinate heme b. H197 lines the a ubiquinone pocket. 4 helical membrane passes run 220–240 (FSLK…FCIF), 284–301 (LGGV…VFLG), 311–336 (MVKT…IMGG), and 344–363 (DILG…IMLL).

This sequence belongs to the cytochrome b family. The main subunits of complex b-c1 are: cytochrome b, cytochrome c1 and the Rieske protein. Requires heme b as cofactor.

The protein localises to the mitochondrion inner membrane. Component of the ubiquinol-cytochrome c reductase complex (complex III or cytochrome b-c1 complex) that is part of the mitochondrial respiratory chain. The b-c1 complex mediates electron transfer from ubiquinol to cytochrome c. Contributes to the generation of a proton gradient across the mitochondrial membrane that is then used for ATP synthesis. This is Cytochrome b (mt:Cyt-b) from Leptorhynchoides thecatus (Thorny-headed worm).